The chain runs to 293 residues: 4-hydroxy-tetrahydrodipicolinate synthase (293 aa).

Thr47 contributes to the pyruvate binding site. Tyr135 serves as the catalytic Proton donor/acceptor. Lys164 (schiff-base intermediate with substrate) is an active-site residue. Ile206 is a pyruvate binding site.

Belongs to the DapA family. In terms of assembly, homotetramer; dimer of dimers.

The protein localises to the cytoplasm. The catalysed reaction is L-aspartate 4-semialdehyde + pyruvate = (2S,4S)-4-hydroxy-2,3,4,5-tetrahydrodipicolinate + H2O + H(+). It functions in the pathway amino-acid biosynthesis; L-lysine biosynthesis via DAP pathway; (S)-tetrahydrodipicolinate from L-aspartate: step 3/4. Its function is as follows. Catalyzes the condensation of (S)-aspartate-beta-semialdehyde [(S)-ASA] and pyruvate to 4-hydroxy-tetrahydrodipicolinate (HTPA). In Flavobacterium psychrophilum (strain ATCC 49511 / DSM 21280 / CIP 103535 / JIP02/86), this protein is 4-hydroxy-tetrahydrodipicolinate synthase.